A 264-amino-acid polypeptide reads, in one-letter code: Intermembrane phospholipid transport system ATP-binding protein MlaF (264 aa).

Residues 6–242 (IEVKNLTFKR…QDLRVVQFLK (237 aa)) enclose the ABC transporter domain. Residue 38 to 45 (GPSGIGKT) participates in ATP binding.

The protein belongs to the ABC transporter superfamily. MlaF family. The complex is composed of two ATP-binding proteins (MlaF), two transmembrane proteins (MlaE), two cytoplasmic solute-binding proteins (MlaB) and six periplasmic solute-binding proteins (MlaD).

The protein localises to the cell inner membrane. Its function is as follows. Part of the ABC transporter complex MlaFEDB, which is involved in a phospholipid transport pathway that maintains lipid asymmetry in the outer membrane by retrograde trafficking of phospholipids from the outer membrane to the inner membrane. Responsible for energy coupling to the transport system. This chain is Intermembrane phospholipid transport system ATP-binding protein MlaF, found in Haemophilus influenzae (strain ATCC 51907 / DSM 11121 / KW20 / Rd).